The primary structure comprises 65 residues: Large ribosomal subunit protein bL35 (65 aa).

Positions 1–22 (MPKIKTVRGAAKRFKKTGSGGF) are disordered. Residues 10–22 (AAKRFKKTGSGGF) show a composition bias toward basic residues.

The protein belongs to the bacterial ribosomal protein bL35 family.

The chain is Large ribosomal subunit protein bL35 from Serratia proteamaculans (strain 568).